The chain runs to 61 residues: Metallothionein (61 aa).

Met-1 is modified (N-acetylmethionine). The segment at 1 to 29 is beta; that stretch reads MDPNCSCAAGGSCTCAGSCKCKECKCTSC. Residues Cys-5, Cys-7, Cys-13, Cys-15, Cys-19, Cys-21, Cys-24, Cys-26, Cys-29, Cys-33, Cys-34, Cys-36, Cys-37, Cys-41, Cys-44, Cys-48, Cys-50, Cys-57, Cys-59, and Cys-60 each contribute to the a divalent metal cation site. The segment at 30 to 61 is alpha; the sequence is KKSCCSCCPPGCTKCAQGCVCKGASDKCNCCA.

This sequence belongs to the metallothionein superfamily. Type 1 family. In terms of assembly, monomer.

In terms of biological role, metallothioneins have a high content of cysteine residues that bind various heavy metals. The sequence is that of Metallothionein from Balaena mysticetus (Bowhead whale).